The chain runs to 205 residues: NADH-ubiquinone oxidoreductase chain 6 (205 aa).

Helical transmembrane passes span 48 to 68 (FFAM…FLFV), 86 to 106 (YLPV…FILD), and 150 to 170 (VWFL…IVLT).

This sequence belongs to the complex I subunit 6 family. Complex I is composed of about 45 different subunits.

It is found in the mitochondrion membrane. It catalyses the reaction a ubiquinone + NADH + 5 H(+)(in) = a ubiquinol + NAD(+) + 4 H(+)(out). Its function is as follows. Core subunit of the mitochondrial membrane respiratory chain NADH dehydrogenase (Complex I) that is believed to belong to the minimal assembly required for catalysis. Complex I functions in the transfer of electrons from NADH to the respiratory chain. The immediate electron acceptor for the enzyme is believed to be ubiquinone. This is NADH-ubiquinone oxidoreductase chain 6 (ND6) from Brassica campestris (Field mustard).